Consider the following 338-residue polypeptide: tRNA N6-adenosine threonylcarbamoyltransferase (338 aa).

Fe cation-binding residues include His111 and His115. Residues 134 to 138 (LVSGG), Asp167, Gly180, and Asn272 each bind substrate. Position 300 (Asp300) interacts with Fe cation.

This sequence belongs to the KAE1 / TsaD family. It depends on Fe(2+) as a cofactor.

The protein localises to the cytoplasm. It catalyses the reaction L-threonylcarbamoyladenylate + adenosine(37) in tRNA = N(6)-L-threonylcarbamoyladenosine(37) in tRNA + AMP + H(+). Functionally, required for the formation of a threonylcarbamoyl group on adenosine at position 37 (t(6)A37) in tRNAs that read codons beginning with adenine. Is involved in the transfer of the threonylcarbamoyl moiety of threonylcarbamoyl-AMP (TC-AMP) to the N6 group of A37, together with TsaE and TsaB. TsaD likely plays a direct catalytic role in this reaction. This Shewanella sp. (strain ANA-3) protein is tRNA N6-adenosine threonylcarbamoyltransferase.